The sequence spans 171 residues: 2-C-methyl-D-erythritol 2,4-cyclodiphosphate synthase (171 aa).

A divalent metal cation contacts are provided by aspartate 8 and histidine 10. Residues 8-10 (DVH) and 34-35 (HS) contribute to the 4-CDP-2-C-methyl-D-erythritol 2-phosphate site. Histidine 42 contributes to the a divalent metal cation binding site. 4-CDP-2-C-methyl-D-erythritol 2-phosphate-binding positions include 56-58 (DIG), 61-65 (FPDTD), 132-135 (TTTE), phenylalanine 139, and arginine 142.

Belongs to the IspF family. As to quaternary structure, homotrimer. The cofactor is a divalent metal cation.

The enzyme catalyses 4-CDP-2-C-methyl-D-erythritol 2-phosphate = 2-C-methyl-D-erythritol 2,4-cyclic diphosphate + CMP. The protein operates within isoprenoid biosynthesis; isopentenyl diphosphate biosynthesis via DXP pathway; isopentenyl diphosphate from 1-deoxy-D-xylulose 5-phosphate: step 4/6. Functionally, involved in the biosynthesis of isopentenyl diphosphate (IPP) and dimethylallyl diphosphate (DMAPP), two major building blocks of isoprenoid compounds. Catalyzes the conversion of 4-diphosphocytidyl-2-C-methyl-D-erythritol 2-phosphate (CDP-ME2P) to 2-C-methyl-D-erythritol 2,4-cyclodiphosphate (ME-CPP) with a corresponding release of cytidine 5-monophosphate (CMP). The chain is 2-C-methyl-D-erythritol 2,4-cyclodiphosphate synthase from Geotalea daltonii (strain DSM 22248 / JCM 15807 / FRC-32) (Geobacter daltonii).